A 265-amino-acid chain; its full sequence is Putative pyruvate, phosphate dikinase regulatory protein 2 (265 aa).

150–157 (GVSRTSKT) lines the ADP pocket.

The protein belongs to the pyruvate, phosphate/water dikinase regulatory protein family. PDRP subfamily.

It catalyses the reaction N(tele)-phospho-L-histidyl/L-threonyl-[pyruvate, phosphate dikinase] + ADP = N(tele)-phospho-L-histidyl/O-phospho-L-threonyl-[pyruvate, phosphate dikinase] + AMP + H(+). The enzyme catalyses N(tele)-phospho-L-histidyl/O-phospho-L-threonyl-[pyruvate, phosphate dikinase] + phosphate + H(+) = N(tele)-phospho-L-histidyl/L-threonyl-[pyruvate, phosphate dikinase] + diphosphate. Functionally, bifunctional serine/threonine kinase and phosphorylase involved in the regulation of the pyruvate, phosphate dikinase (PPDK) by catalyzing its phosphorylation/dephosphorylation. This chain is Putative pyruvate, phosphate dikinase regulatory protein 2, found in Latilactobacillus sakei subsp. sakei (strain 23K) (Lactobacillus sakei subsp. sakei).